The chain runs to 293 residues: Ribosomal protein L11 methyltransferase (293 aa).

Positions 146, 167, 189, and 230 each coordinate S-adenosyl-L-methionine.

Belongs to the methyltransferase superfamily. PrmA family.

It is found in the cytoplasm. It catalyses the reaction L-lysyl-[protein] + 3 S-adenosyl-L-methionine = N(6),N(6),N(6)-trimethyl-L-lysyl-[protein] + 3 S-adenosyl-L-homocysteine + 3 H(+). Its function is as follows. Methylates ribosomal protein L11. In Colwellia psychrerythraea (strain 34H / ATCC BAA-681) (Vibrio psychroerythus), this protein is Ribosomal protein L11 methyltransferase.